The following is a 73-amino-acid chain: Large ribosomal subunit protein bL31 (73 aa).

Residues C16, C18, C37, and C40 each contribute to the Zn(2+) site.

The protein belongs to the bacterial ribosomal protein bL31 family. Type A subfamily. Part of the 50S ribosomal subunit. It depends on Zn(2+) as a cofactor.

Its function is as follows. Binds the 23S rRNA. In Hamiltonella defensa subsp. Acyrthosiphon pisum (strain 5AT), this protein is Large ribosomal subunit protein bL31.